The following is a 150-amino-acid chain: S-protein homolog 3 (150 aa).

Residues Met-1–Ser-23 form the signal peptide. N-linked (GlcNAc...) asparagine glycans are attached at residues Asn-32 and Asn-70.

This sequence belongs to the plant self-incompatibility (S1) protein family.

The protein localises to the secreted. The sequence is that of S-protein homolog 3 from Arabidopsis thaliana (Mouse-ear cress).